The chain runs to 172 residues: Protein YdeJ (172 aa).

The protein belongs to the CinA family.

In terms of biological role, does not have nicotinamide-nucleotide (NMN) amidohydrolase activity. In Escherichia coli (strain K12), this protein is Protein YdeJ (ydeJ).